The chain runs to 611 residues: tRNA uridine 5-carboxymethylaminomethyl modification enzyme MnmG (611 aa).

14–19 serves as a coordination point for FAD; that stretch reads GAGHAG. 274–288 is an NAD(+) binding site; the sequence is GPRYCPSIEDKIVKF.

Belongs to the MnmG family. In terms of assembly, homodimer. Heterotetramer of two MnmE and two MnmG subunits. The cofactor is FAD.

It is found in the cytoplasm. Its function is as follows. NAD-binding protein involved in the addition of a carboxymethylaminomethyl (cmnm) group at the wobble position (U34) of certain tRNAs, forming tRNA-cmnm(5)s(2)U34. This chain is tRNA uridine 5-carboxymethylaminomethyl modification enzyme MnmG, found in Chlamydia felis (strain Fe/C-56) (Chlamydophila felis).